Here is a 2344-residue protein sequence, read N- to C-terminus: Mucin-4 (2344 aa).

The N-terminal stretch at 1-30 (MRGPHGVSWRVPWLCLSCLCSCLLLLPVNT) is a signal peptide. The span at 32–46 (TTSAPKTSTALPSST) shows a compositional bias: low complexity. Disordered stretches follow at residues 32–760 (TTSA…QGSI), 773–1036 (QKMS…TTST), 1072–1130 (VPSL…TPSV), 1171–1197 (STVA…MGAS), and 1233–1269 (SGLT…TVPP). Over residues 47–100 (NPSQMTSQVSNPTASSYRMTKNTGQASPMVTSSSITTLPQSQHTGSMKTTRNPQ) the composition is skewed to polar residues. The segment at 81–1006 (ITTLPQSQHT…VSTLVTSTQE (926 aa)) is variable number of tandem repeats (VNTR). Composition is skewed to low complexity over residues 101 to 116 (TTGT…ASSS) and 123 to 137 (TTSQ…TTTS). An O-linked (GalNAc...) threonine glycan is attached at T133. Residues 142–225 (ESSSPPSTSV…GGMKTTRNPQ (84 aa)) show a composition bias toward polar residues. Over residues 226-273 (TTGTTEVTTTLSASSSDHPTSSPESTPGNTAPRTTETSTTTTTKVLMT) the composition is skewed to low complexity. The span at 274–305 (SLQQKLPTGSTLGTSTQELTTLPQSQHTGIMK) shows a compositional bias: polar residues. 2 stretches are compositionally biased toward low complexity: residues 306–322 (TTSR…TTRT) and 335–349 (TSSQ…TTTS). Positions 373 to 436 (SGDTGHTMAV…GMKTTRNPQR (64 aa)) are enriched in polar residues. 2 O-linked (GalNAc...) threonine glycosylation sites follow: T391 and T392. A compositionally biased stretch (low complexity) spans 437–446 (TTPTEVTTST). Over residues 447-468 (LSASSSDQVQVETTSRATLSPD) the composition is skewed to polar residues. The span at 469–492 (TTTTSHAPSVSSSSPSPPSTEGTS) shows a compositional bias: low complexity. The O-linked (GalNAc...) threonine glycan is linked to T470. O-linked (GalNAc...) serine glycosylation is present at S479. Over residues 493–509 (VDTGLTTAVTTQDSTPA) the composition is skewed to polar residues. Residues 510–546 (TTQGSLTSSSQTLSTVSPLSTSTQETSTQELTSSQSQ) are compositionally biased toward low complexity. Residues 547 to 580 (HTGSMKTTHNPQTTRNTEVTTTLSASSSDQVQVE) show a composition bias toward polar residues. Residues 581–594 (TTSQTTLSDATTTS) show a composition bias toward low complexity. Positions 599–682 (ESSSPPSTSD…GGMKTTRNPQ (84 aa)) are enriched in polar residues. Composition is skewed to low complexity over residues 683–698 (TTGT…ASSS) and 705–719 (TSSQ…TTTS). Composition is skewed to polar residues over residues 724-760 (ESSS…QGSI) and 773-807 (QKMS…SSRP). Positions 808-828 (QTTSVTSTLSSSPSGSTPVQT) are enriched in low complexity. Polar residues predominate over residues 829–868 (RSVTSSSDERTNPTSSGVSNTSPATTEVLTPTSSPESTPG). Residues 869-915 (NTAPRTTETSTTTTTKVLMTSLQQKLPTGSTLGTSTPTEVTTTLSAS) are compositionally biased toward low complexity. Over residues 916 to 994 (SSDQVQVETT…ISVTPSTQKM (79 aa)) the composition is skewed to polar residues. The span at 995–1015 (STVSTLVTSTQELTSSQSQRT) shows a compositional bias: low complexity. Residues 1016–1026 (GSMGTSSKPQA) are compositionally biased toward polar residues. Positions 1027-1036 (TTPTEVTTST) are enriched in low complexity. Positions 1072–1083 (VPSLMHSSKPQA) are enriched in polar residues. Over residues 1084 to 1096 (TTPTEVTTSTLSS) the composition is skewed to low complexity. Positions 1097 to 1116 (FSRGSTQTQTVSWETSSSGK) are enriched in polar residues. 3 stretches are compositionally biased toward low complexity: residues 1118-1130 (TAPS…TPSV), 1175-1188 (HRQS…HSQS), and 1233-1267 (SGLT…RSTV). In terms of domain architecture, NIDO spans 1332 to 1492 (GHSGVMLISL…TGYTGRCGPT (161 aa)). The disordered stretch occupies residues 1574–1597 (GRHRTGLAAGTTSPLSASSTSSGG). Low complexity predominate over residues 1580–1597 (LAAGTTSPLSASSTSSGG). The 196-residue stretch at 1609 to 1804 (RPAWTFGDPH…HYGMTSETNG (196 aa)) folds into the VWFD domain. N-linked (GlcNAc...) asparagine glycans are attached at residues N1644, N1660, N1672, N1689, N1698, N1704, N1715, N1724, N1759, N1780, N1787, N1829, N1874, N1926, N1951, N1974, N1981, N2029, and N2048. The region spanning 2047 to 2086 (QNHSCPVNYCYNHGHCDISGPPDCQPTCTCAPAFTGNRCF) is the EGF-like 1 domain. Disulfide bonds link C2051–C2062, C2056–C2074, and C2076–C2085. Residues N2114 and N2121 are each glycosylated (N-linked (GlcNAc...) asparagine). The helical transmembrane segment at 2173-2193 (GPLIHYLNNQLISAVMEAFLL) threads the bilayer. N2227 carries N-linked (GlcNAc...) asparagine glycosylation. An EGF-like 2 domain is found at 2256 to 2295 (VSPCSEGYCHNGGQCKHLPDGPQCTCATFSIYTSWGERCE). 3 cysteine pairs are disulfide-bonded: C2259–C2270, C2264–C2279, and C2281–C2294. The chain crosses the membrane as a helical span at residues 2301-2321 (LGAFFGILFGALGALLLLAIL).

In terms of assembly, a heterodimeric complex, composed of a mucin-4 alpha chain and a cysteine-rich transmembrane mucin-4 beta chain. Mucin-4 beta chain interacts with ERBB2 via the EGF-like domain 1. In nonpolarized cells, associates with ERBB2 and ERBB3. Post-translationally, proteolytically cleaved into 2 subunits, mucin-4 alpha chain and mucin-4 beta chain. In terms of processing, mucin-4 alpha subunit is highly O-glycosylated. Mucin-4 beta subunit is predominantly N-glycosylated. In terms of tissue distribution, expression is developmentally regulated in the mammary gland, dramatically increases in the lactating gland compared with the virgin mammary gland, while decreasing again during mammary gland involution. Expressed in 13762 ascites cells. Overexpressed in some aggressive mammary tumors. Overexpression seems to block cell-cell and cell-matrix interactions to protect tumor cells from immune surveillance, and to promote metastasis.

The protein localises to the cell membrane. It is found in the secreted. Its function is as follows. Membrane-bound mucin, a family of highly glycosylated proteins that constitute the major component of the mucus, the slimy and viscous secretion covering epithelial surfaces. These glycoproteins play important roles in the protection of the epithelium and are implicated in epithelial renewal and differentiation. Regulates cellular behavior through both anti-adhesive effects on cell-cell and cell-extracellular matrix interactions and its ability to act as an intramembrane ligand for ERBB2. Plays an important role in proliferation and differentiation of epithelial cells by inducing specific phosphorylation of ERBB2. In polarized epithelial cells, segregates ERBB2 and other ERBB receptors and prevents ERBB2 from acting as a coreceptor. The interaction with ERBB2 leads to enhanced expression of CDKN1B. The formation of a MUC4-ERBB2-ERBB3-NRG1 complex leads to down-regulation of CDKN1B, resulting in repression of apoptosis and stimulation of proliferation. Its ability to promote tumor growth may be mainly due to repression of apoptosis as opposed to proliferation. The sequence is that of Mucin-4 (Muc4) from Rattus norvegicus (Rat).